Consider the following 226-residue polypeptide: Large ribosomal subunit protein uL3 (226 aa).

The protein belongs to the universal ribosomal protein uL3 family. As to quaternary structure, part of the 50S ribosomal subunit. Forms a cluster with proteins L14 and L19.

In terms of biological role, one of the primary rRNA binding proteins, it binds directly near the 3'-end of the 23S rRNA, where it nucleates assembly of the 50S subunit. The protein is Large ribosomal subunit protein uL3 of Sulfurihydrogenibium sp. (strain YO3AOP1).